Reading from the N-terminus, the 190-residue chain is ATP-dependent Clp protease proteolytic subunit 2 (190 aa).

Serine 98 functions as the Nucleophile in the catalytic mechanism. Histidine 123 is a catalytic residue.

The protein belongs to the peptidase S14 family. Fourteen ClpP subunits assemble into 2 heptameric rings which stack back to back to give a disk-like structure with a central cavity, resembling the structure of eukaryotic proteasomes.

Its subcellular location is the cytoplasm. It carries out the reaction Hydrolysis of proteins to small peptides in the presence of ATP and magnesium. alpha-casein is the usual test substrate. In the absence of ATP, only oligopeptides shorter than five residues are hydrolyzed (such as succinyl-Leu-Tyr-|-NHMec, and Leu-Tyr-Leu-|-Tyr-Trp, in which cleavage of the -Tyr-|-Leu- and -Tyr-|-Trp bonds also occurs).. Cleaves peptides in various proteins in a process that requires ATP hydrolysis. Has a chymotrypsin-like activity. Plays a major role in the degradation of misfolded proteins. This Bacillus licheniformis (strain ATCC 14580 / DSM 13 / JCM 2505 / CCUG 7422 / NBRC 12200 / NCIMB 9375 / NCTC 10341 / NRRL NRS-1264 / Gibson 46) protein is ATP-dependent Clp protease proteolytic subunit 2.